The primary structure comprises 56 residues: MDILLEEVRKVFGNTDEGKLAERLIVAYRQRGARGAREVLKKYLEELGVDVADIES.

Its subcellular location is the cytoplasm. It localises to the cytoskeleton. Part of an actin-like archaeal cytoskeleton. This is Arcadin-3 from Pyrobaculum calidifontis (strain DSM 21063 / JCM 11548 / VA1).